A 566-amino-acid polypeptide reads, in one-letter code: CTP synthase (566 aa).

The amidoligase domain stretch occupies residues Met1–Leu270. Ser13 lines the CTP pocket. Residue Ser13 coordinates UTP. ATP-binding positions include Ser14–Ile19 and Asp71. Asp71 and Glu144 together coordinate Mg(2+). Residues Asp151–Glu153, Lys191–Gln196, and Lys227 contribute to the CTP site. UTP-binding positions include Lys191–Gln196 and Lys227. A Glutamine amidotransferase type-1 domain is found at Ser295–Ala547. Gly356 is an L-glutamine binding site. Cys383 (nucleophile; for glutamine hydrolysis) is an active-site residue. L-glutamine is bound by residues Leu384–Gln387, Glu407, and Arg473. Catalysis depends on residues His520 and Glu522.

The protein belongs to the CTP synthase family. Homotetramer.

It carries out the reaction UTP + L-glutamine + ATP + H2O = CTP + L-glutamate + ADP + phosphate + 2 H(+). The catalysed reaction is L-glutamine + H2O = L-glutamate + NH4(+). It catalyses the reaction UTP + NH4(+) + ATP = CTP + ADP + phosphate + 2 H(+). Its pathway is pyrimidine metabolism; CTP biosynthesis via de novo pathway; CTP from UDP: step 2/2. Allosterically activated by GTP, when glutamine is the substrate; GTP has no effect on the reaction when ammonia is the substrate. The allosteric effector GTP functions by stabilizing the protein conformation that binds the tetrahedral intermediate(s) formed during glutamine hydrolysis. Inhibited by the product CTP, via allosteric rather than competitive inhibition. Its function is as follows. Catalyzes the ATP-dependent amination of UTP to CTP with either L-glutamine or ammonia as the source of nitrogen. Regulates intracellular CTP levels through interactions with the four ribonucleotide triphosphates. This chain is CTP synthase, found in Polaromonas naphthalenivorans (strain CJ2).